A 161-amino-acid chain; its full sequence is MIAIHILLLVFSNIVLPALCINVFVYGTLKKGQSNYHELTNTTHGQAEFITCARTKDPYPMVIATKDKFPFLLNVPGSGQQVYGEIYNVDQNMLDFLDEFEECPDLYQRTSIQLKILKGNGDSEEAFVYSTSTFDPDWLNKPTFSVYDATGDPGNNCVSRE.

26-29 (YGTL) contacts substrate. The active-site Proton acceptor is the glutamate 101.

It belongs to the gamma-glutamylcyclotransferase family.

It carries out the reaction epsilon-(gamma-L-glutamyl)-L-lysine = 5-oxo-L-proline + L-lysine. May contribute to degradation of proteins cross-linked by transglutaminases by degrading the cross-link between a lysine and a glutamic acid residue. Catalyzes the formation of 5-oxo-L-proline from L-gamma-glutamyl-L-epsilon-lysine. The polypeptide is Gamma-glutamylaminecyclotransferase A (ggact.1) (Danio rerio (Zebrafish)).